The primary structure comprises 339 residues: Ketol-acid reductoisomerase (NADP(+)) (339 aa).

One can recognise a KARI N-terminal Rossmann domain in the interval 1-182; that stretch reads MRVYYDRDAD…GGGRAGIIET (182 aa). Residues 24 to 27, Arg-48, Ser-51, Thr-53, and 83 to 86 each bind NADP(+); these read YGSQ and DELQ. The active site involves His-108. Position 134 (Gly-134) interacts with NADP(+). The KARI C-terminal knotted domain maps to 183-328; that stretch reads SFKEECETDL…AKLRDMMPWI (146 aa). Mg(2+)-binding residues include Asp-191, Glu-195, Glu-227, and Glu-231. Residue Ser-252 coordinates substrate.

Belongs to the ketol-acid reductoisomerase family. Requires Mg(2+) as cofactor.

The enzyme catalyses (2R)-2,3-dihydroxy-3-methylbutanoate + NADP(+) = (2S)-2-acetolactate + NADPH + H(+). It carries out the reaction (2R,3R)-2,3-dihydroxy-3-methylpentanoate + NADP(+) = (S)-2-ethyl-2-hydroxy-3-oxobutanoate + NADPH + H(+). Its pathway is amino-acid biosynthesis; L-isoleucine biosynthesis; L-isoleucine from 2-oxobutanoate: step 2/4. The protein operates within amino-acid biosynthesis; L-valine biosynthesis; L-valine from pyruvate: step 2/4. Its function is as follows. Involved in the biosynthesis of branched-chain amino acids (BCAA). Catalyzes an alkyl-migration followed by a ketol-acid reduction of (S)-2-acetolactate (S2AL) to yield (R)-2,3-dihydroxy-isovalerate. In the isomerase reaction, S2AL is rearranged via a Mg-dependent methyl migration to produce 3-hydroxy-3-methyl-2-ketobutyrate (HMKB). In the reductase reaction, this 2-ketoacid undergoes a metal-dependent reduction by NADPH to yield (R)-2,3-dihydroxy-isovalerate. This Rhodopseudomonas palustris (strain HaA2) protein is Ketol-acid reductoisomerase (NADP(+)).